Reading from the N-terminus, the 790-residue chain is Phenylalanine--tRNA ligase beta subunit (790 aa).

A tRNA-binding domain is found at 40–149; sequence AEKVSGVVVG…IDAPVGTDIN (110 aa). In terms of domain architecture, B5 spans 402–479; sequence NKQIKINLSI…RIYGYSKLPE (78 aa). Residues Asp-457, Asp-463, Glu-466, and Glu-467 each coordinate Mg(2+). The region spanning 698–789 is the FDX-ACB domain; sequence SKYPSVSRDI…LKTKFNIEQR (92 aa).

The protein belongs to the phenylalanyl-tRNA synthetase beta subunit family. Type 1 subfamily. As to quaternary structure, tetramer of two alpha and two beta subunits. Mg(2+) serves as cofactor.

The protein localises to the cytoplasm. It carries out the reaction tRNA(Phe) + L-phenylalanine + ATP = L-phenylalanyl-tRNA(Phe) + AMP + diphosphate + H(+). The protein is Phenylalanine--tRNA ligase beta subunit of Francisella tularensis subsp. tularensis (strain SCHU S4 / Schu 4).